A 78-amino-acid chain; its full sequence is ATP synthase subunit c (78 aa).

2 consecutive transmembrane segments (helical) span residues 11–31 (FIGA…VGHV) and 53–73 (LFIG…VALL).

The protein belongs to the ATPase C chain family. As to quaternary structure, F-type ATPases have 2 components, F(1) - the catalytic core - and F(0) - the membrane proton channel. F(1) has five subunits: alpha(3), beta(3), gamma(1), delta(1), epsilon(1). F(0) has four main subunits: a(1), b(1), b'(1) and c(10-14). The alpha and beta chains form an alternating ring which encloses part of the gamma chain. F(1) is attached to F(0) by a central stalk formed by the gamma and epsilon chains, while a peripheral stalk is formed by the delta, b and b' chains.

The protein resides in the cell inner membrane. In terms of biological role, f(1)F(0) ATP synthase produces ATP from ADP in the presence of a proton or sodium gradient. F-type ATPases consist of two structural domains, F(1) containing the extramembraneous catalytic core and F(0) containing the membrane proton channel, linked together by a central stalk and a peripheral stalk. During catalysis, ATP synthesis in the catalytic domain of F(1) is coupled via a rotary mechanism of the central stalk subunits to proton translocation. Key component of the F(0) channel; it plays a direct role in translocation across the membrane. A homomeric c-ring of between 10-14 subunits forms the central stalk rotor element with the F(1) delta and epsilon subunits. The protein is ATP synthase subunit c of Jannaschia sp. (strain CCS1).